The chain runs to 429 residues: Glucose-1-phosphate adenylyltransferase (429 aa).

Alpha-D-glucose 1-phosphate contacts are provided by residues Gly162, 177–178 (EK), and Ser209.

Belongs to the bacterial/plant glucose-1-phosphate adenylyltransferase family. In terms of assembly, homotetramer.

It catalyses the reaction alpha-D-glucose 1-phosphate + ATP + H(+) = ADP-alpha-D-glucose + diphosphate. The protein operates within glycan biosynthesis; glycogen biosynthesis. With respect to regulation, activated by 3-phosphoglycerate and inhibited by phosphate. Functionally, involved in the biosynthesis of ADP-glucose, a building block required for the elongation reactions to produce glycogen. Catalyzes the reaction between ATP and alpha-D-glucose 1-phosphate (G1P) to produce pyrophosphate and ADP-Glc. This is Glucose-1-phosphate adenylyltransferase from Nostoc sp. (strain PCC 7120 / SAG 25.82 / UTEX 2576).